The primary structure comprises 440 residues: Protein OSB3, chloroplastic/mitochondrial (440 aa).

A chloroplast and mitochondrion-targeting transit peptide spans Met1–Asn61. An SSB domain is found at Ile80–Gln178. 3 PDF region regions span residues Trp218–Glu270, Trp294–Pro342, and Trp380–Pro428.

In terms of tissue distribution, expressed primarily in the female gametophyte and in the floral abscission zone.

The protein resides in the mitochondrion. It localises to the plastid. It is found in the chloroplast. In terms of biological role, binds single-stranded DNA. The polypeptide is Protein OSB3, chloroplastic/mitochondrial (OSB3) (Arabidopsis thaliana (Mouse-ear cress)).